The following is a 480-amino-acid chain: Protein nucleotidyltransferase YdiU (480 aa).

ATP is bound by residues Gly-86, Gly-88, Arg-89, Lys-109, Asp-121, Gly-122, Arg-172, and Arg-179. Asp-248 functions as the Proton acceptor in the catalytic mechanism. The Mg(2+) site is built by Asn-249 and Asp-258. ATP is bound at residue Asp-258.

The protein belongs to the SELO family. Requires Mg(2+) as cofactor. Mn(2+) is required as a cofactor.

The enzyme catalyses L-seryl-[protein] + ATP = 3-O-(5'-adenylyl)-L-seryl-[protein] + diphosphate. It catalyses the reaction L-threonyl-[protein] + ATP = 3-O-(5'-adenylyl)-L-threonyl-[protein] + diphosphate. It carries out the reaction L-tyrosyl-[protein] + ATP = O-(5'-adenylyl)-L-tyrosyl-[protein] + diphosphate. The catalysed reaction is L-histidyl-[protein] + UTP = N(tele)-(5'-uridylyl)-L-histidyl-[protein] + diphosphate. The enzyme catalyses L-seryl-[protein] + UTP = O-(5'-uridylyl)-L-seryl-[protein] + diphosphate. It catalyses the reaction L-tyrosyl-[protein] + UTP = O-(5'-uridylyl)-L-tyrosyl-[protein] + diphosphate. Nucleotidyltransferase involved in the post-translational modification of proteins. It can catalyze the addition of adenosine monophosphate (AMP) or uridine monophosphate (UMP) to a protein, resulting in modifications known as AMPylation and UMPylation. This chain is Protein nucleotidyltransferase YdiU, found in Salmonella choleraesuis (strain SC-B67).